The following is a 93-amino-acid chain: Stromal cell-derived factor 1 (93 aa).

A signal peptide spans 1–21 (MDAKVVAVLALVLAALCISDG). The short motif at 22 to 23 (KP) is the Receptor activation motif element. The receptor and heparin binding stretch occupies residues 29 to 33 (RCPCR). 2 disulfides stabilise this stretch: Cys-30/Cys-55 and Cys-32/Cys-71. 3 receptor binding regions span residues 39–41 (IAR), 48–50 (KIL), and 60–70 (VARLKNNNRQV). Heparin contacts are provided by residues 41–51 (RANVKHLKILN), Arg-62, Gln-69, and Lys-85.

It belongs to the intercrine alpha (chemokine CxC) family. As to quaternary structure, monomer or homodimer; in equilibrium. Dimer formation is induced by non acidic pH and the presence of multivalent anions, and by binding to CXCR4 or heparin. Monomeric form is required for full chemotactic activity and resistance to ischemia/reperfusion injury, whereas the dimeric form acts as a partial agonist of CXCR4, stimulating Ca2+ mobilization but with no chemotactic activity and instead acts as a selective antagonist that blocks chemotaxis induced by the monomeric form. Interacts with the N-terminus of ACKR3. Interacts with integrin subunit ITGB3 (via the allosteric site (site 2)). Interacts with TNFAIP6 (via Link domain). As to expression, highest expression levels detected in kidney, liver, spleen and muscle. Isoform Alpha is expressed ubiquitously but at varying levels, while isoform Beta displays tissue-specific expression, with expression detected in kidney, liver, heart, spleen and muscle but not in lung, colon, brain, skin and stomach.

Its subcellular location is the secreted. Its function is as follows. Chemoattractant active on T-lymphocytes and monocytes but not neutrophils. Activates the C-X-C chemokine receptor CXCR4 to induce a rapid and transient rise in the level of intracellular calcium ions and chemotaxis. Also binds to atypical chemokine receptor ACKR3, which activates the beta-arrestin pathway and acts as a scavenger receptor for SDF-1. Binds to the allosteric site (site 2) of integrins and activates integrins ITGAV:ITGB3, ITGA4:ITGB1 and ITGA5:ITGB1 in a CXCR4-independent manner. Acts as a positive regulator of monocyte migration and a negative regulator of monocyte adhesion via the LYN kinase. Stimulates migration of monocytes and T-lymphocytes through its receptors, CXCR4 and ACKR3, and decreases monocyte adherence to surfaces coated with ICAM-1, a ligand for beta-2 integrins. SDF1A/CXCR4 signaling axis inhibits beta-2 integrin LFA-1 mediated adhesion of monocytes to ICAM-1 through LYN kinase. Plays a protective role after myocardial infarction. Induces down-regulation and internalization of ACKR3 expressed in various cells. Has several critical functions during embryonic development; required for B-cell lymphopoiesis, myelopoiesis in bone marrow and heart ventricular septum formation. Stimulates the proliferation of bone marrow-derived B-cell progenitors in the presence of IL7 as well as growth of stromal cell-dependent pre-B-cells. In Mus musculus (Mouse), this protein is Stromal cell-derived factor 1 (Cxcl12).